The following is a 124-amino-acid chain: Small ribosomal subunit protein uS12 (124 aa).

The tract at residues 1–24 (MPTINQLVRQGRKKSVKKTNTPAL) is disordered. Residue aspartate 89 is modified to 3-methylthioaspartic acid.

It belongs to the universal ribosomal protein uS12 family. Part of the 30S ribosomal subunit. Contacts proteins S8 and S17. May interact with IF1 in the 30S initiation complex.

Functionally, with S4 and S5 plays an important role in translational accuracy. In terms of biological role, interacts with and stabilizes bases of the 16S rRNA that are involved in tRNA selection in the A site and with the mRNA backbone. Located at the interface of the 30S and 50S subunits, it traverses the body of the 30S subunit contacting proteins on the other side and probably holding the rRNA structure together. The combined cluster of proteins S8, S12 and S17 appears to hold together the shoulder and platform of the 30S subunit. This chain is Small ribosomal subunit protein uS12, found in Desulfotalea psychrophila (strain LSv54 / DSM 12343).